The primary structure comprises 261 residues: Imidazole glycerol phosphate synthase subunit HisF (261 aa).

Active-site residues include Asp16 and Asp135.

Belongs to the HisA/HisF family. In terms of assembly, heterodimer of HisH and HisF.

The protein resides in the cytoplasm. It catalyses the reaction 5-[(5-phospho-1-deoxy-D-ribulos-1-ylimino)methylamino]-1-(5-phospho-beta-D-ribosyl)imidazole-4-carboxamide + L-glutamine = D-erythro-1-(imidazol-4-yl)glycerol 3-phosphate + 5-amino-1-(5-phospho-beta-D-ribosyl)imidazole-4-carboxamide + L-glutamate + H(+). The protein operates within amino-acid biosynthesis; L-histidine biosynthesis; L-histidine from 5-phospho-alpha-D-ribose 1-diphosphate: step 5/9. IGPS catalyzes the conversion of PRFAR and glutamine to IGP, AICAR and glutamate. The HisF subunit catalyzes the cyclization activity that produces IGP and AICAR from PRFAR using the ammonia provided by the HisH subunit. This is Imidazole glycerol phosphate synthase subunit HisF from Mycolicibacterium vanbaalenii (strain DSM 7251 / JCM 13017 / BCRC 16820 / KCTC 9966 / NRRL B-24157 / PYR-1) (Mycobacterium vanbaalenii).